Here is a 578-residue protein sequence, read N- to C-terminus: Probable cytochrome c oxidase subunit 1-alpha (578 aa).

The tract at residues 1–21 (MSILNEPQGASAAEDSYENEL) is disordered. A helical membrane pass occupies residues 44-64 (IGTMYLVTSFAFFVIGGVMAL). Histidine 90 serves as a coordination point for Fe(II)-heme a. Transmembrane regions (helical) follow at residues 93-113 (IMLL…IMPL), 125-145 (LNMF…GGFL), 174-194 (LWIM…VNFI), 217-237 (VLLT…ALFA), 262-282 (LFWF…FGIV), and 294-314 (IFGY…SVTV). The Cu cation site is built by histidine 268 and tyrosine 272. Positions 268–272 (HPEVY) form a cross-link, 1'-histidyl-3'-tyrosine (His-Tyr). Residues histidine 317 and histidine 318 each contribute to the Cu cation site. Transmembrane regions (helical) follow at residues 319-339 (MYVT…LIAV) and 363-383 (MLWS…GVIL). A heme a3-binding site is contributed by histidine 401. The next 3 helical transmembrane spans lie at 402-422 (FHYV…HFWW), 437-457 (ITFW…HWLG), and 480-500 (ISTI…YNIW). Residue histidine 403 coordinates Fe(II)-heme a.

This sequence belongs to the heme-copper respiratory oxidase family. Associates with subunits II, III and IV to form cytochrome c oxidase. It depends on Cu(2+) as a cofactor. Heme serves as cofactor.

The protein resides in the cell membrane. It catalyses the reaction 4 Fe(II)-[cytochrome c] + O2 + 8 H(+)(in) = 4 Fe(III)-[cytochrome c] + 2 H2O + 4 H(+)(out). It participates in energy metabolism; oxidative phosphorylation. Functionally, cytochrome c oxidase is the component of the respiratory chain that catalyzes the reduction of oxygen to water. Subunits 1-3 form the functional core of the enzyme complex. CO I is the catalytic subunit of the enzyme. Electrons originating in cytochrome c are transferred via the copper A center of subunit 2 and heme A of subunit 1 to the bimetallic center formed by heme A3 and copper B. This Streptomyces coelicolor (strain ATCC BAA-471 / A3(2) / M145) protein is Probable cytochrome c oxidase subunit 1-alpha (ctaD1).